Consider the following 212-residue polypeptide: Protein Rv0786c (212 aa).

In Mycobacterium tuberculosis (strain ATCC 25618 / H37Rv), this protein is Protein Rv0786c.